Reading from the N-terminus, the 806-residue chain is MEPFSAAQNKEDKDTSVEPPRRRCHRKNKGTNVEPPSSPYHPKVLARWDPANEKRPDIGEAPVFHPTSEEFEDTLAYIEKIRPLAESFGICRIVPPSNWSPPCRLKGDSIWKNKNFPTRVQFVDLLQNRGPVKKKTPKGRKRKRGKYSRTVAPKKRNGSVSKSVSTPKATEEENFGFESGPEFTLEKFEKYAQDFKDSYFERKDNVGDPSVEEIEGEYWRIIEKETNEVKVLYGTDLENPILGSGFSKGVKIPTRRNDMDKYISSGWNLNNLARLQGSLLSFEDCEISGVQVPWLYVGMCFSTFCWHVEDNHLYSLNYHHFGEPKVWYGVPGSHATGLEKAMRKHLPDLFDEQPDLLHELVTQFSPTILKNEGVPVYRAVQNAGEYVLTFPRAYHSGFNCGFNCAEAVNVAPVDWLAHGQNAVEIYSQETRKTSLSHDKILLGAAFEAVKSLSAHGEDNTKRFSWKRFCGKDGIITKAIEARLRMEEKRIEALGNGFSLVKMDKDFDSNCERECISCFSDLHLSATGCKNCSSLEEYGCTKHDICSCEGKDRFIFLRYTIDELSSLVRALEGESDDLKAWLSKVMEGCSETQKGESSGIIVKEKQVQEECFDLNGECNKSSEICEDASIMDLAAYHVEPINLGFLVVGKLWCNKHAIFPKGFKSRVKFYNVQDPMRISYYVSEIVDAGLLGPLFKVTLEESQDESFSYASPQKCWEMVLLRVKEEIMRRSNQKQDVHMLESIDGLKMFGFRSPFIVQATEALDPNHGQVEYWNHKNEKDSLEMKDCFMSNSSQSLSKARLFGVDLN.

The segment at 1-43 (MEPFSAAQNKEDKDTSVEPPRRRCHRKNKGTNVEPPSSPYHPK) is disordered. A compositionally biased stretch (basic and acidic residues) spans 9 to 21 (NKEDKDTSVEPPR). A JmjN domain is found at 61–102 (APVFHPTSEEFEDTLAYIEKIRPLAESFGICRIVPPSNWSPP). Residues 128-176 (NRGPVKKKTPKGRKRKRGKYSRTVAPKKRNGSVSKSVSTPKATEEENFG) are disordered. The segment covering 131–157 (PVKKKTPKGRKRKRGKYSRTVAPKKRN) has biased composition (basic residues). Residues 132–139 (VKKKTPKG) carry the Nuclear localization signal motif. Residues 158–168 (GSVSKSVSTPK) show a composition bias toward polar residues. A JmjC domain is found at 261-427 (KYISSGWNLN…HGQNAVEIYS (167 aa)). Residues His307, Glu309, and His395 each contribute to the Fe cation site. 8 residues coordinate Zn(2+): Cys514, Cys517, Cys528, Cys531, Cys539, His542, Cys545, and Cys547. The C5HC2 zinc finger occupies 514 to 566 (CISCFSDLHLSATGCKNCSSLEEYGCTKHDICSCEGKDRFIFLRYTIDELSSL). Residues 629 to 687 (IMDLAAYHVEPINLGFLVVGKLWCNKHAIFPKGFKSRVKFYNVQDPMRISYYVSEIVDA) enclose the FYR N-terminal domain. In terms of domain architecture, FYR C-terminal spans 689-775 (LLGPLFKVTL…HGQVEYWNHK (87 aa)).

The protein belongs to the JARID1 histone demethylase family. It depends on Fe(2+) as a cofactor. Expressed in roots, cotyledons, shoot apex, rosette and cauline leaves, stems, inflorescences and siliques. Expressed at low levels during vegetative growth but to higher levels in young floral organs.

The protein resides in the nucleus. It carries out the reaction N(6),N(6),N(6)-trimethyl-L-lysyl(4)-[histone H3] + 2-oxoglutarate + O2 = N(6),N(6)-dimethyl-L-lysyl(4)-[histone H3] + formaldehyde + succinate + CO2. Its function is as follows. Histone demethylase that demethylates 'Lys-4' (H3K4me) of histone H3 with a specific activity for H3K4me3. No activity on H3K4me2, H3K4me1, H3K9me3/2, H3K27me3/2 and H3K36me3/2. Involved in the control of flowering time by demethylating H3K4me3 at the FLC locus and repressing its expression. The repression of FLC level and reduction in H3K4me3 at the FLC locus results in induction of the flowering activator FT, which is a downstream target of FLC. Promotes salt tolerance by down-regulating the expression of several transcriptions factors involved in stress responses via H3K4me3 and H3K4me2 demethylation. The polypeptide is Lysine-specific demethylase JMJ15 (Arabidopsis thaliana (Mouse-ear cress)).